The sequence spans 249 residues: Type III pantothenate kinase (249 aa).

Residue 6-13 participates in ATP binding; that stretch reads DIGNSRTK. Residues tyrosine 89 and 96 to 99 each bind substrate; that span reads GIDR. Aspartate 98 (proton acceptor) is an active-site residue. Aspartate 119 is a K(+) binding site. Residue threonine 122 coordinates ATP. Residue threonine 174 participates in substrate binding.

This sequence belongs to the type III pantothenate kinase family. As to quaternary structure, homodimer. It depends on NH4(+) as a cofactor. The cofactor is K(+).

The protein localises to the cytoplasm. The enzyme catalyses (R)-pantothenate + ATP = (R)-4'-phosphopantothenate + ADP + H(+). It participates in cofactor biosynthesis; coenzyme A biosynthesis; CoA from (R)-pantothenate: step 1/5. In terms of biological role, catalyzes the phosphorylation of pantothenate (Pan), the first step in CoA biosynthesis. This Colwellia psychrerythraea (strain 34H / ATCC BAA-681) (Vibrio psychroerythus) protein is Type III pantothenate kinase.